The sequence spans 455 residues: F-box/LRR-repeat protein At5g35995 (455 aa).

An F-box domain is found at 4-51 (RDFISSLPDEVLGKKILSLLPTKLVVSTSVLSKRWRNLFHFVDSFDLE). 5 LRR repeats span residues 114–138 (DHYL…SYRT), 152–176 (FPAL…LISG), 282–305 (IRNV…CYTM), 308–324 (FDKL…ENGW), and 325–348 (QALP…LLHK).

The chain is F-box/LRR-repeat protein At5g35995 from Arabidopsis thaliana (Mouse-ear cress).